The following is a 791-amino-acid chain: uncharacterized protein (791 aa).

The disordered stretch occupies residues 267 to 288 (APGESSAQSSYEQSTRAGDSAP). Positions 271-283 (SSAQSSYEQSTRA) are enriched in polar residues.

This is an uncharacterized protein from Treponema pallidum (strain Nichols).